We begin with the raw amino-acid sequence, 419 residues long: CCA-adding enzyme (419 aa).

The ATP site is built by glycine 8 and arginine 11. CTP is bound by residues glycine 8 and arginine 11. Residues aspartate 21 and aspartate 23 each contribute to the Mg(2+) site. ATP is bound by residues arginine 91, arginine 137, and arginine 140. CTP is bound by residues arginine 91, arginine 137, and arginine 140.

Belongs to the tRNA nucleotidyltransferase/poly(A) polymerase family. Bacterial CCA-adding enzyme type 2 subfamily. Mg(2+) is required as a cofactor.

It catalyses the reaction a tRNA precursor + 2 CTP + ATP = a tRNA with a 3' CCA end + 3 diphosphate. It carries out the reaction a tRNA with a 3' CCA end + 2 CTP + ATP = a tRNA with a 3' CCACCA end + 3 diphosphate. Its function is as follows. Catalyzes the addition and repair of the essential 3'-terminal CCA sequence in tRNAs without using a nucleic acid template. Adds these three nucleotides in the order of C, C, and A to the tRNA nucleotide-73, using CTP and ATP as substrates and producing inorganic pyrophosphate. tRNA 3'-terminal CCA addition is required both for tRNA processing and repair. Also involved in tRNA surveillance by mediating tandem CCA addition to generate a CCACCA at the 3' terminus of unstable tRNAs. While stable tRNAs receive only 3'-terminal CCA, unstable tRNAs are marked with CCACCA and rapidly degraded. The polypeptide is CCA-adding enzyme (Buchnera aphidicola subsp. Baizongia pistaciae (strain Bp)).